The following is a 447-amino-acid chain: Transducin beta-like protein 2 (447 aa).

The tract at residues 38-72 is disordered; sequence RSGRPACQKANGFPPDKSSGSKKQKQYQRIRKEKP. A compositionally biased stretch (basic residues) spans 57-69; that stretch reads GSKKQKQYQRIRK. WD repeat units follow at residues 88 to 127, 134 to 174, 186 to 226, 228 to 267, 277 to 316, 329 to 367, and 371 to 409; these read SHSG…QREH, VELD…DGGY, KHKA…STIN, NQMN…GEFQ, GHSA…KKKQ, AAGA…KEEC, and VHGE…RAMV. Lys168 is covalently cross-linked (Glycyl lysine isopeptide (Lys-Gly) (interchain with G-Cter in SUMO2)). At Thr433 the chain carries Phosphothreonine; by ATM or ATR.

This Homo sapiens (Human) protein is Transducin beta-like protein 2 (TBL2).